A 907-amino-acid polypeptide reads, in one-letter code: Protein translocase subunit SecA (907 aa).

Residues Gln87, 105 to 109, and Asp512 contribute to the ATP site; that span reads GEGKT. A disordered region spans residues 834–907; it reads QSDVDDMEQR…KYKQCHGKLS (74 aa). A compositionally biased stretch (basic and acidic residues) spans 840-856; it reads MEQRRREEEAKIQRDYQ. The segment covering 865 to 876 has biased composition (polar residues); sequence DESQASSDNTPK. The segment covering 878–887 has biased composition (basic and acidic residues); that stretch reads MIREGDKVGR. Zn(2+) contacts are provided by Cys891, Cys893, Cys902, and His903. A compositionally biased stretch (basic residues) spans 897-907; the sequence is KKYKQCHGKLS.

The protein belongs to the SecA family. As to quaternary structure, monomer and homodimer. Part of the essential Sec protein translocation apparatus which comprises SecA, SecYEG and auxiliary proteins SecDF-YajC and YidC. The cofactor is Zn(2+).

Its subcellular location is the cell inner membrane. The protein localises to the cytoplasm. The enzyme catalyses ATP + H2O + cellular proteinSide 1 = ADP + phosphate + cellular proteinSide 2.. Functionally, part of the Sec protein translocase complex. Interacts with the SecYEG preprotein conducting channel. Has a central role in coupling the hydrolysis of ATP to the transfer of proteins into and across the cell membrane, serving both as a receptor for the preprotein-SecB complex and as an ATP-driven molecular motor driving the stepwise translocation of polypeptide chains across the membrane. The sequence is that of Protein translocase subunit SecA from Shewanella denitrificans (strain OS217 / ATCC BAA-1090 / DSM 15013).